Here is a 120-residue protein sequence, read N- to C-terminus: Large ribosomal subunit protein uL18 (120 aa).

The interval 1-24 (MITKAAKNATRKKRHARVRAKLTG) is disordered. A compositionally biased stretch (basic residues) spans 9-20 (ATRKKRHARVRA).

Belongs to the universal ribosomal protein uL18 family. As to quaternary structure, part of the 50S ribosomal subunit; part of the 5S rRNA/L5/L18/L25 subcomplex. Contacts the 5S and 23S rRNAs.

Functionally, this is one of the proteins that bind and probably mediate the attachment of the 5S RNA into the large ribosomal subunit, where it forms part of the central protuberance. In Bacillus mycoides (strain KBAB4) (Bacillus weihenstephanensis), this protein is Large ribosomal subunit protein uL18.